A 78-amino-acid polypeptide reads, in one-letter code: Large ribosomal subunit protein bL28 (78 aa).

The protein belongs to the bacterial ribosomal protein bL28 family.

In Parasynechococcus marenigrum (strain WH8102), this protein is Large ribosomal subunit protein bL28.